The primary structure comprises 341 residues: Ribosomal RNA small subunit methyltransferase C (341 aa).

The protein belongs to the methyltransferase superfamily. RsmC family. As to quaternary structure, monomer.

The protein localises to the cytoplasm. It catalyses the reaction guanosine(1207) in 16S rRNA + S-adenosyl-L-methionine = N(2)-methylguanosine(1207) in 16S rRNA + S-adenosyl-L-homocysteine + H(+). Its function is as follows. Specifically methylates the guanine in position 1207 of 16S rRNA in the 30S particle. This Vibrio parahaemolyticus serotype O3:K6 (strain RIMD 2210633) protein is Ribosomal RNA small subunit methyltransferase C.